A 297-amino-acid chain; its full sequence is uncharacterized protein (297 aa).

Residue Glu-46 is part of the active site.

Belongs to the PhzF family. As to quaternary structure, homodimer and homotetramer.

This is an uncharacterized protein from Escherichia coli O157:H7.